Consider the following 178-residue polypeptide: MSGGKYVDSEGHLYTVPIREQGNIYKPNNKAMADEVTEKQVYDAHTKEIDLVNRDPKHLNDDVVKIDFEDVIAEPEGTHSFDGIWKASFTTFTVTKYWFYRLLSTIFGIPMALIWGIYFAILSFLHIWAVVPCIKSFLIEIQCISRVYSIYVHTFCDPLFEAIGKIFSNIRISTQKEI.

Residue S2 is modified to N-acetylserine. Phosphoserine is present on S2. A required for homooligomerization region spans residues 2 to 94; the sequence is SGGKYVDSEG…WKASFTTFTV (93 aa). Over 2-104 the chain is Cytoplasmic; sequence SGGKYVDSEG…TKYWFYRLLS (103 aa). K5 carries the post-translational modification N6-acetyllysine; alternate. K5 is covalently cross-linked (Glycyl lysine isopeptide (Lys-Gly) (interchain with G-Cter in ubiquitin); alternate). Residue Y6 is modified to Phosphotyrosine. A Phosphoserine modification is found at S9. Y14 is modified (phosphotyrosine; by ABL1 and INSR). Residue Y25 is modified to Phosphotyrosine. Residues K26, K30, K39, K47, and K57 each participate in a glycyl lysine isopeptide (Lys-Gly) (interchain with G-Cter in ubiquitin) cross-link. An interaction with CAVIN3 region spans residues 82–94; it reads DGIWKASFTTFTV. The helical intramembrane region spans 105–125; sequence TIFGIPMALIWGIYFAILSFL. The Cytoplasmic portion of the chain corresponds to 126–178; that stretch reads HIWAVVPCIKSFLIEIQCISRVYSIYVHTFCDPLFEAIGKIFSNIRISTQKEI. Residues 131–142 are interacts with SPRY1, SPRY2, SPRY3 and SPRY4; it reads VPCIKSFLIEIQ. S-palmitoyl cysteine attachment occurs at residues C133, C143, and C156. The tract at residues 149–160 is interacts with SPRY1, SPRY2, and SPRY4; sequence SIYVHTFCDPLF. Positions 167–178 are interacts with SPRY1, SPRY2, SPRY3 and SPRY4; sequence FSNIRISTQKEI.

The protein belongs to the caveolin family. In terms of assembly, homooligomer. Interacts (via the N-terminus) with DPP4; the interaction is direct. Forms a stable heterooligomeric complex with CAV2 that targets to lipid rafts and drives caveolae formation. Interacts with BMX, BTK, CTNNB1, CDH1, GLIPR2, JUP, NOSTRIN, SNAP25 and STX1A. Interacts with SLC7A9. Interacts with TGFBR1. Interacts with CTNNB1, CDH1 and JUP. Interacts with PACSIN2; this interaction induces membrane tubulation. Interacts with CAVIN3 (via leucine-zipper domain) in a cholesterol-sensitive manner. Interacts with EHD2 in a cholesterol-dependent manner. Interacts with CAVIN1. Forms a ternary complex with UBXN6 and VCP; mediates CAV1 targeting to lysosomes for degradation. Interacts with ABCG1; this interaction regulates ABCG1-mediated cholesterol efflux. Interacts with NEU3; this interaction enhances NEU3 sialidase activity within caveola. Interacts (via C-terminus) with SPRY1, SPRY2 (via C-terminus), SPRY3, and SPRY4. Interacts with IGFBP5; this interaction allows trafficking of IGFBP5 from the plasma membrane to the nucleus. The N-terminus of both isoforms are blocked. In terms of processing, phosphorylated at Tyr-14 by ABL1 in response to oxidative stress. Post-translationally, ubiquitinated. Undergo monoubiquitination and multi- and/or polyubiquitination. Monoubiquitination of N-terminal lysines promotes integration in a ternary complex with UBXN6 and VCP which promotes oligomeric CAV1 targeting to lysosomes for degradation. Ubiquitinated by ZNRF1; leading to degradation and modulation of the TLR4-mediated immune response. Adipose tissue, lung, heart, skeletal muscle, stomach, small bowel, kidney, spleen and testis (at protein level).

The protein resides in the golgi apparatus membrane. The protein localises to the cell membrane. It is found in the membrane. Its subcellular location is the caveola. It localises to the membrane raft. The protein resides in the golgi apparatus. The protein localises to the trans-Golgi network. Functionally, may act as a scaffolding protein within caveolar membranes. Forms a stable heterooligomeric complex with CAV2 that targets to lipid rafts and drives caveolae formation. Mediates the recruitment of CAVIN proteins (CAVIN1/2/3/4) to the caveolae. Interacts directly with G-protein alpha subunits and can functionally regulate their activity. Involved in the costimulatory signal essential for T-cell receptor (TCR)-mediated T-cell activation. Its binding to DPP4 induces T-cell proliferation and NF-kappa-B activation in a T-cell receptor/CD3-dependent manner. Recruits CTNNB1 to caveolar membranes and may regulate CTNNB1-mediated signaling through the Wnt pathway. Negatively regulates TGFB1-mediated activation of SMAD2/3 by mediating the internalization of TGFBR1 from membrane rafts leading to its subsequent degradation. Binds 20(S)-hydroxycholesterol (20(S)-OHC). The polypeptide is Caveolin-1 (Cav1) (Mus musculus (Mouse)).